Consider the following 110-residue polypeptide: Large ribosomal subunit protein uL22 (110 aa).

It belongs to the universal ribosomal protein uL22 family. In terms of assembly, part of the 50S ribosomal subunit.

Its function is as follows. This protein binds specifically to 23S rRNA; its binding is stimulated by other ribosomal proteins, e.g. L4, L17, and L20. It is important during the early stages of 50S assembly. It makes multiple contacts with different domains of the 23S rRNA in the assembled 50S subunit and ribosome. In terms of biological role, the globular domain of the protein is located near the polypeptide exit tunnel on the outside of the subunit, while an extended beta-hairpin is found that lines the wall of the exit tunnel in the center of the 70S ribosome. This is Large ribosomal subunit protein uL22 from Alkaliphilus oremlandii (strain OhILAs) (Clostridium oremlandii (strain OhILAs)).